A 340-amino-acid polypeptide reads, in one-letter code: Nod factor export ATP-binding protein I (340 aa).

The span at 1-24 (MLKRKLGPEDLRRLETPAIERESH) shows a compositional bias: basic and acidic residues. Positions 1–34 (MLKRKLGPEDLRRLETPAIERESHGQTSAKSSVP) are disordered. Polar residues predominate over residues 25 to 34 (GQTSAKSSVP). The ABC transporter domain occupies 42–272 (VDFAGVTKSY…HIGCQVMEIY (231 aa)). Residue 74-81 (GPNGAGKS) participates in ATP binding.

It belongs to the ABC transporter superfamily. Lipooligosaccharide exporter (TC 3.A.1.102) family. As to quaternary structure, the complex is composed of two ATP-binding proteins (NodI) and two transmembrane proteins (NodJ).

The protein localises to the cell inner membrane. Functionally, part of the ABC transporter complex NodIJ involved in the export of the nodulation factors (Nod factors), the bacterial signal molecules that induce symbiosis and subsequent nodulation induction. Nod factors are LCO (lipo-chitin oligosaccharide), a modified beta-1,4-linked N-acetylglucosamine oligosaccharide. This subunit is responsible for energy coupling to the transport system. This Mesorhizobium japonicum (strain LMG 29417 / CECT 9101 / MAFF 303099) (Mesorhizobium loti (strain MAFF 303099)) protein is Nod factor export ATP-binding protein I.